The sequence spans 175 residues: MLPPTACSVMSWMLLSCLMLLSQVQGEDSLKNIPSARISCPKGSQAYGSYCYALFQIPQTWFDAELACQKRPGGHLVSVLNSAEASFLSSMVKRTGNSYQYTWIGLHDPTLGAEPNGGGWEWSNNDVMNYFNWERNPSTALDRAFCGSLSRASGFLKWRDMTCEVKLPYVCKFTG.

Positions 1–26 are cleaved as a signal peptide; it reads MLPPTACSVMSWMLLSCLMLLSQVQG. A propeptide spanning residues 27–37 is cleaved from the precursor; that stretch reads EDSLKNIPSAR. Intrachain disulfides connect Cys40-Cys51, Cys68-Cys171, and Cys146-Cys163. The C-type lectin domain occupies 47–172; that stretch reads YGSYCYALFQ…CEVKLPYVCK (126 aa). Position 107 (His107) interacts with Zn(2+). An EPN motif is present at residues 114–116; the sequence is EPN. Glu121 contacts Zn(2+).

Forms a hexameric membrane-permeabilizing oligomeric pore on membrane phospholipids. The hexamer is formed by three dimers related by helical symmetry. Forms filaments, filamentation traps pore complexes and limits damage to host cells. Interacts with EXTL3. Proteolytic processing by trypsin removes an inhibitory N-terminal propeptide and is essential for peptidoglycan binding and antibacterial activity. Constitutively expressed in the small intestine, moderately in colon and at an extremely low level in healthy pancreas.

The protein localises to the secreted. Lipopolysaccharide inhibits pore-forming activity, explaining why is bactericidal for Gram-positive but not Gram-negative bacteria. Its function is as follows. Bactericidal C-type lectin which acts against several intestinal Gram-positive and Gram-negative bacteria. Lacks antibacterial activity against S.typhimurium. May play a role in protection against infection with S.enteritidis by inhibiting its translocation from the gut lumen into intestinal tissues and further extraintestinal tissues. Acts as a hormone in response to different stimuli. Secreted by different cell types to activate its receptor EXTL3 and induce cell specific signaling pathways. In pancreas, is able stimulate cell proliferation. The chain is Regenerating islet-derived protein 3-beta from Mus musculus (Mouse).